We begin with the raw amino-acid sequence, 734 residues long: DNA ligase (734 aa).

NAD(+)-binding positions include 42-46 (DAEYD), 91-92 (SL), and glutamate 125. Catalysis depends on lysine 127, which acts as the N6-AMP-lysine intermediate. The NAD(+) site is built by arginine 148, glutamate 185, lysine 301, and lysine 325. Zn(2+) contacts are provided by cysteine 430, cysteine 433, cysteine 454, and cysteine 460. The region spanning 655–734 (SADSEVAGKT…DTWLQRVGKA (80 aa)) is the BRCT domain.

Belongs to the NAD-dependent DNA ligase family. LigA subfamily. The cofactor is Mg(2+). It depends on Mn(2+) as a cofactor.

The enzyme catalyses NAD(+) + (deoxyribonucleotide)n-3'-hydroxyl + 5'-phospho-(deoxyribonucleotide)m = (deoxyribonucleotide)n+m + AMP + beta-nicotinamide D-nucleotide.. Functionally, DNA ligase that catalyzes the formation of phosphodiester linkages between 5'-phosphoryl and 3'-hydroxyl groups in double-stranded DNA using NAD as a coenzyme and as the energy source for the reaction. It is essential for DNA replication and repair of damaged DNA. The sequence is that of DNA ligase from Mesorhizobium japonicum (strain LMG 29417 / CECT 9101 / MAFF 303099) (Mesorhizobium loti (strain MAFF 303099)).